The sequence spans 464 residues: 3-isopropylmalate dehydratase large subunit (464 aa).

Positions 337, 397, and 400 each coordinate [4Fe-4S] cluster.

The protein belongs to the aconitase/IPM isomerase family. LeuC type 1 subfamily. As to quaternary structure, heterodimer of LeuC and LeuD. It depends on [4Fe-4S] cluster as a cofactor.

It carries out the reaction (2R,3S)-3-isopropylmalate = (2S)-2-isopropylmalate. The protein operates within amino-acid biosynthesis; L-leucine biosynthesis; L-leucine from 3-methyl-2-oxobutanoate: step 2/4. Its function is as follows. Catalyzes the isomerization between 2-isopropylmalate and 3-isopropylmalate, via the formation of 2-isopropylmaleate. This is 3-isopropylmalate dehydratase large subunit from Bacillus cereus (strain AH187).